A 1713-amino-acid polypeptide reads, in one-letter code: Serine/threonine-protein kinase MRCK beta (1713 aa).

Positions 76–342 constitute a Protein kinase domain; that stretch reads FEIIKVIGRG…IEDFKKHAFF (267 aa). Residues 82-90 and K105 each bind ATP; that span reads IGRGAFGEV. D200 acts as the Proton acceptor in catalysis. 2 positions are modified to phosphoserine; by autocatalysis: S221 and S233. T239 carries the phosphothreonine; by autocatalysis modification. One can recognise an AGC-kinase C-terminal domain in the interval 343-413; sequence EGLNWENIRN…TTESCFSDRG (71 aa). At T423 the chain carries Phosphothreonine. Residues 434–649 adopt a coiled-coil conformation; it reads LENSLQIEAY…ASKERKLREH (216 aa). The interval 461–485 is disordered; the sequence is LQESTQTVQSLHGSTRALGNSNRDK. The span at 463–481 shows a compositional bias: polar residues; the sequence is ESTQTVQSLHGSTRALGNS. At R671 the chain carries Omega-N-methylarginine. 2 coiled-coil regions span residues 681–815 and 882–939; these read QEIS…AHWE and ALEA…FRAD. S927 carries the post-translational modification Phosphoserine. Y954 carries the phosphotyrosine modification. Polar residues-rich tracts occupy residues 971 to 994 and 1001 to 1014; these read ASDQ…TSTE and RSQQ…LPNT. The tract at residues 971–1014 is disordered; sequence ASDQETQASKLDLSPSVSVATSTEQQEDAARSQQRPSTVPLPNT. A Phorbol-ester/DAG-type zinc finger spans residues 1026–1076; sequence AHQFSIKSFPSPTQCSHCTSLMVGLIRQGYACEVCAFSCHVSCKDSAPQVC. A PH domain is found at 1096-1215; that stretch reads GTAYKGYVKV…WVGILEGLQA (120 aa). One can recognise a CNH domain in the interval 1241-1515; it reads IKTVLAAAIV…RPLNSDGSLN (275 aa). Residues 1585 to 1598 form the CRIB domain; the sequence is ISNPTNFNHVAHMG. The tract at residues 1615-1713 is disordered; sequence PTAQEEKQGP…EGLDQPACDA (99 aa). Basic and acidic residues predominate over residues 1666 to 1677; it reads DFDKEPDSDSTK. Phosphoserine is present on residues S1682, S1684, S1688, S1692, and S1695.

It belongs to the protein kinase superfamily. AGC Ser/Thr protein kinase family. DMPK subfamily. In terms of assembly, homodimer and homotetramer via the coiled coil regions. Interacts tightly with GTP-bound but not GDP-bound CDC42. Interacts with TJP1; this interaction requires the presence of catalytically active CDC42. Forms a tripartite complex with MYO18A and LURAP1 with the latter acting as an adapter connecting CDC42BPB and MYO18A. LURAP1 binding results in activation of CDC42BPB by abolition of its negative autoregulation. Interacts with STRIP1, STRN3 and SIKE1. Interacts with CPNE4 (via VWFA domain). Interacts with LURAP1. Interacts (via AGC-kinase C-terminal domain) with FAM89B/LRAP25 (via LRR repeat). Forms a tripartite complex with FAM89B/LRAP25 and LIMK1. The cofactor is Mg(2+). Post-translationally, proteolytically cleaved by caspases upon apoptosis induction. Expressed in all tissues examined with highest levels in lung and kidney.

It localises to the cytoplasm. The protein localises to the cell membrane. It is found in the cell junction. Its subcellular location is the cell projection. The protein resides in the lamellipodium. The catalysed reaction is L-seryl-[protein] + ATP = O-phospho-L-seryl-[protein] + ADP + H(+). It catalyses the reaction L-threonyl-[protein] + ATP = O-phospho-L-threonyl-[protein] + ADP + H(+). Maintained in an inactive, closed conformation by an interaction between the kinase domain and the negative autoregulatory C-terminal coiled-coil region. Agonist binding to the phorbol ester binding site disrupts this, releasing the kinase domain to allow N-terminus-mediated dimerization and kinase activation by transautophosphorylation. Inhibited by chelerythrine chloride. In terms of biological role, serine/threonine-protein kinase which is an important downstream effector of CDC42 and plays a role in the regulation of cytoskeleton reorganization and cell migration. Regulates actin cytoskeletal reorganization via phosphorylation of PPP1R12C and MYL9/MLC2. In concert with MYO18A and LURAP1, is involved in modulating lamellar actomyosin retrograde flow that is crucial to cell protrusion and migration. Phosphorylates PPP1R12A. In concert with FAM89B/LRAP25 mediates the targeting of LIMK1 to the lamellipodium resulting in its activation and subsequent phosphorylation of CFL1 which is important for lamellipodial F-actin regulation. The chain is Serine/threonine-protein kinase MRCK beta from Rattus norvegicus (Rat).